A 184-amino-acid polypeptide reads, in one-letter code: Photosystem I assembly protein Ycf4 (184 aa).

2 helical membrane passes run 21–43 (NFCWAFILFLGSSGFLLVGISSY) and 63–85 (GLVMSFYGIAGLFISAYLWCAIS).

Belongs to the Ycf4 family.

It is found in the plastid. It localises to the chloroplast thylakoid membrane. In terms of biological role, seems to be required for the assembly of the photosystem I complex. This chain is Photosystem I assembly protein Ycf4, found in Spinacia oleracea (Spinach).